The chain runs to 59 residues: Large ribosomal subunit protein bL33 (59 aa).

It belongs to the bacterial ribosomal protein bL33 family.

In Borreliella afzelii (strain PKo) (Borrelia afzelii), this protein is Large ribosomal subunit protein bL33.